Reading from the N-terminus, the 319-residue chain is ATP-dependent 6-phosphofructokinase (319 aa).

An ATP-binding site is contributed by G11. 21-25 contacts ADP; the sequence is RAVVR. Residues 72-73 and 102-105 contribute to the ATP site; these read RY and GDGS. D103 lines the Mg(2+) pocket. Residue 125-127 coordinates substrate; it reads TID. Catalysis depends on D127, which acts as the Proton acceptor. R154 contacts ADP. Substrate is bound by residues R162 and 169-171; that span reads MGR. Residues 185–187, R211, and 213–215 each bind ADP; these read GAE and KKH. Residues E222, R243, and 249-252 contribute to the substrate site; that span reads HVQR.

It belongs to the phosphofructokinase type A (PFKA) family. ATP-dependent PFK group I subfamily. Prokaryotic clade 'B1' sub-subfamily. In terms of assembly, homotetramer. Mg(2+) serves as cofactor.

Its subcellular location is the cytoplasm. The enzyme catalyses beta-D-fructose 6-phosphate + ATP = beta-D-fructose 1,6-bisphosphate + ADP + H(+). Its pathway is carbohydrate degradation; glycolysis; D-glyceraldehyde 3-phosphate and glycerone phosphate from D-glucose: step 3/4. Allosterically activated by ADP and other diphosphonucleosides, and allosterically inhibited by phosphoenolpyruvate. Its function is as follows. Catalyzes the phosphorylation of D-fructose 6-phosphate to fructose 1,6-bisphosphate by ATP, the first committing step of glycolysis. In Listeria welshimeri serovar 6b (strain ATCC 35897 / DSM 20650 / CCUG 15529 / CIP 8149 / NCTC 11857 / SLCC 5334 / V8), this protein is ATP-dependent 6-phosphofructokinase.